Reading from the N-terminus, the 449-residue chain is MRLKELLPNFLIVHQEVPEDPIAFKSTDKRENENKEITIPELIDTKVPELADGATDTLYGLLVNGHLQTAYGSFRHFDNIYKVQYKRMIIKYPHGGEGTVDFAVNGRSTKRRKVEKEYVPTSQPVFNGNLKRRYSYYSPDDPKLNSDDAKPMLIILHGLTGGSRESYVRAIVHEITTKYDFEACVFNARGCCYSAITTPLLYNGGWTNDIRYCVNDLRKRFPNRKFYMMGFSLGASIMTNYLGEESDRTKIECAISVSNPFDLYNSAYFINSTPMGSRFYSPALGHNLLRMVRNHLSTLEENPDFKDVIEKHLKKIRTVRQFDNLLTGPMFGYKNAEEYYKNASSYKRIPGIRTPFIALHAQDDPIVGGDLPIDQIKSNPYTLLLETSTGGHVGWFKDRSGRRWYAEPLCRFLKIFHDEITVKGLKPDLENVQLPDPNCEPIATTFRAN.

Residue Lys-82 forms a Glycyl lysine isopeptide (Lys-Gly) (interchain with G-Cter in ubiquitin) linkage. The AB hydrolase-1 domain maps to 151–392 (PMLIILHGLT…LLLETSTGGH (242 aa)). Positions 230–234 (GFSLG) match the GXSXG motif. The active-site Nucleophile is the Ser-232. Residues Asp-364 and His-392 each act as charge relay system in the active site.

The protein belongs to the AB hydrolase superfamily. AB hydrolase 4 family.

The catalysed reaction is Hydrolyzes glycerol monoesters of long-chain fatty acids.. The enzyme catalyses 1-hexadecanoylglycerol + H2O = glycerol + hexadecanoate + H(+). It catalyses the reaction 1-octadecanoylglycerol + H2O = octadecanoate + glycerol + H(+). It carries out the reaction 1-(9Z-octadecenoyl)-glycerol + H2O = glycerol + (9Z)-octadecenoate + H(+). Its function is as follows. Converts monoacylglycerides (MAG) to free fatty acids and glycerol. Has a preference for palmitoyl-MAG. Does not play a significant role in ethyl ester biosynthesis. Also possesses ester hydrolase and low but persistent TAG lipase activity. The polypeptide is Monoacylglycerol lipase (Saccharomyces cerevisiae (strain ATCC 204508 / S288c) (Baker's yeast)).